The sequence spans 154 residues: uncharacterized protein (154 aa).

4 consecutive transmembrane segments (helical) span residues 20–42 (FRLF…GQFG), 62–84 (FFGY…AVLL), 91–109 (ALGA…LINY), and 113–132 (IGVQ…LLWM).

Its subcellular location is the cell membrane. This is an uncharacterized protein from Bacillus subtilis (strain 168).